The sequence spans 247 residues: ATP synthase subunit a 1 (247 aa).

6 helical membrane-spanning segments follow: residues 32–52 (YMLLAVVLIAGMMLAAGRALV), 82–102 (FFPLVFSLFMFIFVSNIVGII), 112–132 (IIVTFSLALLVFLTVIIYGFY), 141–161 (LFVPSGIPAVILPLVVVIEII), 181–201 (GHVTLKVFASFVTMLGALGFV), and 206–226 (ALLPLGLTVALTGLELMVAFL).

The protein belongs to the ATPase A chain family. F-type ATPases have 2 components, CF(1) - the catalytic core - and CF(0) - the membrane proton channel. CF(1) has five subunits: alpha(3), beta(3), gamma(1), delta(1), epsilon(1). CF(0) has four main subunits: a, b, b' and c.

It is found in the cell inner membrane. Functionally, key component of the proton channel; it plays a direct role in the translocation of protons across the membrane. The polypeptide is ATP synthase subunit a 1 (Bradyrhizobium sp. (strain BTAi1 / ATCC BAA-1182)).